Consider the following 121-residue polypeptide: Large ribosomal subunit protein uL14 (121 aa).

Belongs to the universal ribosomal protein uL14 family. In terms of assembly, part of the 50S ribosomal subunit. Forms a cluster with proteins L3 and L19. In the 70S ribosome, L14 and L19 interact and together make contacts with the 16S rRNA in bridges B5 and B8.

Functionally, binds to 23S rRNA. Forms part of two intersubunit bridges in the 70S ribosome. The protein is Large ribosomal subunit protein uL14 of Synechococcus sp. (strain CC9311).